Consider the following 639-residue polypeptide: Tetracycline resistance protein TetW (639 aa).

Positions methionine 1–glutamate 243 constitute a tr-type G domain. GTP-binding positions include alanine 10–threonine 17, aspartate 74–histidine 78, and asparagine 128–aspartate 131.

It belongs to the TRAFAC class translation factor GTPase superfamily. Classic translation factor GTPase family. TetM/TetO subfamily.

Abolishes the inhibitory effect of tetracyclin on protein synthesis by a non-covalent modification of the ribosomes. The polypeptide is Tetracycline resistance protein TetW (tetW) (Butyrivibrio fibrisolvens).